The sequence spans 544 residues: NAD(P)H-quinone oxidoreductase chain 4 (544 aa).

Helical transmembrane passes span 29-49, 60-80, 115-135, 139-159, 161-181, 193-213, 234-254, 268-288, 302-322, 339-359, 360-380, 400-422, 442-462, and 488-508; these read FPWLTTAILLPIAASLAIPLV, WYALGVSLTTFLITVGAYLNG, LILLTSFITTLACLAAWPVTF, LFFFLLLAMDGGQIAVFAVQD, LLFFLAWELELIPVYLLLAIW, FILYTAVSSLFILLVALAMAF, GFQALCYAGLLIAFGVKLPIV, TAPVHMLLAGILLKMGGYALF, FAPLLVVLGVVNIIYAALTSF, MGFVLIGIGSFSPLAASGAML, QMISHGLIGASLFFLVGATYD, MFAMWTACSLASLALPGMSGFVS, IVIDGAAAIGVILTPIYLLSM, and IYIISCLLVPIIGIGLYPKLV.

This sequence belongs to the complex I subunit 4 family.

The protein localises to the cellular thylakoid membrane. It carries out the reaction a plastoquinone + NADH + (n+1) H(+)(in) = a plastoquinol + NAD(+) + n H(+)(out). The catalysed reaction is a plastoquinone + NADPH + (n+1) H(+)(in) = a plastoquinol + NADP(+) + n H(+)(out). In terms of biological role, NDH-1 shuttles electrons from NAD(P)H, via FMN and iron-sulfur (Fe-S) centers, to quinones in the respiratory chain. The immediate electron acceptor for the enzyme in this species is believed to be plastoquinone. Couples the redox reaction to proton translocation (for every two electrons transferred, four hydrogen ions are translocated across the cytoplasmic membrane), and thus conserves the redox energy in a proton gradient. This is NAD(P)H-quinone oxidoreductase chain 4 from Synechococcus sp. (strain RCC307).